We begin with the raw amino-acid sequence, 536 residues long: Arylsulfatase (536 aa).

Positions 13, 14, and 51 each coordinate Ca(2+). The active-site Nucleophile is cysteine 51. Cysteine 51 carries the 3-oxoalanine (Cys) modification. Residue histidine 115 is part of the active site. 2 residues coordinate Ca(2+): aspartate 317 and asparagine 318.

The protein belongs to the sulfatase family. In terms of assembly, monomer. Requires Ca(2+) as cofactor. The conversion to 3-oxoalanine (also known as C-formylglycine, FGly), of a serine or cysteine residue in prokaryotes and of a cysteine residue in eukaryotes, is critical for catalytic activity.

It is found in the cytoplasm. It carries out the reaction an aryl sulfate + H2O = a phenol + sulfate + H(+). Functionally, hydrolyzes the bond between sulfate and the aromatic ring in a compound such as 4-nitrocatechol sulfate. The sequence is that of Arylsulfatase (atsA) from Pseudomonas aeruginosa (strain ATCC 15692 / DSM 22644 / CIP 104116 / JCM 14847 / LMG 12228 / 1C / PRS 101 / PAO1).